A 244-amino-acid chain; its full sequence is Carbonyl reductase [NADPH] 2 (244 aa).

NADP(+) is bound at residue 11–39 (LVTGAGKGIGRDTVKALHASGAKVVAVTR). At serine 42 the chain carries Phosphoserine. Substrate is bound at residue serine 136. Tyrosine 149 functions as the Proton acceptor in the catalytic mechanism. Serine 176 is subject to Phosphoserine.

The protein belongs to the short-chain dehydrogenases/reductases (SDR) family. In terms of assembly, homotetramer. Predominantly expressed in lung, in ciliated cells, non-ciliated bronchiolar cells and type-II alveolar pneumocytes. Also detected in adipose tissue (at protein level). Low expression in testis, heart, kidney, spleen, brain and liver.

The protein resides in the mitochondrion matrix. It carries out the reaction a secondary alcohol + NADP(+) = a ketone + NADPH + H(+). Functionally, may function in the pulmonary metabolism of endogenous carbonyl compounds, such as aliphatic aldehydes and ketones derived from lipid peroxidation, 3-ketosteroids and fatty aldehydes, as well as in xenobiotic metabolism. The chain is Carbonyl reductase [NADPH] 2 (Cbr2) from Mus musculus (Mouse).